Reading from the N-terminus, the 207-residue chain is MPKVALYNTEGAQVGEIELNDAIFGIEPNEAVMHQAVVTQLAAWRRGTHKVKSRGEVSGGGKKPWRQKGTGRARAGTSRSPLWRGGAIIFGPQPRSYKIAMPKKVRRLALKSALSDKVRSGNLIVVDALEMDAPKTKVIAGILNKLKVERKALLVTADIDETVFKSARNIPGVSPVEAVGINVYDILNHDKLVITKNAVAKVEEVFA.

The interval 49–79 (HKVKSRGEVSGGGKKPWRQKGTGRARAGTSR) is disordered.

This sequence belongs to the universal ribosomal protein uL4 family. In terms of assembly, part of the 50S ribosomal subunit.

In terms of biological role, one of the primary rRNA binding proteins, this protein initially binds near the 5'-end of the 23S rRNA. It is important during the early stages of 50S assembly. It makes multiple contacts with different domains of the 23S rRNA in the assembled 50S subunit and ribosome. Functionally, forms part of the polypeptide exit tunnel. The chain is Large ribosomal subunit protein uL4 from Heliobacterium modesticaldum (strain ATCC 51547 / Ice1).